Here is a 450-residue protein sequence, read N- to C-terminus: Protein tweety homolog 1 (450 aa).

At 1–43 the chain is on the extracellular side; it reads MGAPPGYRPSAWVHLLHQLPRADFQLRPVPSGFAPQEQEYQQA. The helical transmembrane segment at 44–64 threads the bilayer; the sequence is LLLVAALAGLGLGLSLIFIAV. The Cytoplasmic portion of the chain corresponds to 65–88; it reads YLIRFCCCRPPEPPGSKTPSPGGG. Residues 89 to 109 traverse the membrane as a helical segment; the sequence is CVTWSCIVALLAGCIGIGIGF. Over 110–214 the chain is Extracellular; that stretch reads YGNSETSDGV…DVSFVEEYRW (105 aa). N130 carries N-linked (GlcNAc...) asparagine glycosylation. A helical membrane pass occupies residues 215–235; the sequence is LAYVLLLLLELLVCLFTLLGL. The Cytoplasmic segment spans residues 236 to 240; it reads AKQSK. Residues 241–261 form a helical membrane-spanning segment; sequence WLVIVMTVMSLLVLVLSWGSM. Residues 262-390 lie on the Extracellular side of the membrane; it reads GLEAATAVGL…LRGLCEDALE (129 aa). N284 and N355 each carry an N-linked (GlcNAc...) asparagine glycan. C303 and C370 form a disulfide bridge. A helical transmembrane segment spans residues 391-411; it reads GLLFLLLFSLLSAGALATALC. At 412–450 the chain is on the cytoplasmic side; that stretch reads SLPRAWALFPPSDDYDDTDDDDPFNPQESKRFVQWQSSI. The interval 428-450 is disordered; that stretch reads DTDDDDPFNPQESKRFVQWQSSI. Phosphoserine is present on S440.

The protein belongs to the tweety family. As to quaternary structure, homotetramer; disulfide-linked. Homodimer. N-glycosylated. Contains high-mannose, hybrid and complex oligosaccharides.

The protein resides in the cell membrane. It catalyses the reaction chloride(in) = chloride(out). It carries out the reaction L-glutamate(out) = L-glutamate(in). Its function is as follows. Calcium-independent, swelling-dependent volume-regulated anion channel (VRAC-swell) which plays a pivotal role in the process of regulatory volume decrease (RVD) in the brain through the efflux of anions like chloride and organic osmolytes like glutamate. The polypeptide is Protein tweety homolog 1 (TTYH1) (Macaca fascicularis (Crab-eating macaque)).